Here is a 218-residue protein sequence, read N- to C-terminus: GTP cyclohydrolase 1 (218 aa).

Positions 109, 112, and 180 each coordinate Zn(2+).

Belongs to the GTP cyclohydrolase I family. Toroid-shaped homodecamer, composed of two pentamers of five dimers.

It carries out the reaction GTP + H2O = 7,8-dihydroneopterin 3'-triphosphate + formate + H(+). It functions in the pathway cofactor biosynthesis; 7,8-dihydroneopterin triphosphate biosynthesis; 7,8-dihydroneopterin triphosphate from GTP: step 1/1. This Histophilus somni (strain 129Pt) (Haemophilus somnus) protein is GTP cyclohydrolase 1.